Reading from the N-terminus, the 411-residue chain is MNALAATNRNFKLAARLLGLDSKLEKSLLIPFREIKVECTIPKDDGTLASFVGFRVQHDNARGPMKGGIRYHPEVDPDEVNALAQLMTWKTAVAKIPYGGAKGGIGCDPSKLSISELERLTRVFTQKIHDLIGIHTDVPAPDMGTGPQTMAWILDEYSKFHGYSPAVVTGKPIDLGGSLGRDAATGRGVMFGTEALLNEHGKTISGQRFVIQGFGNVGSWAAKLISEKGGKIVAVSDITGAIKNKDGIDIPALLKHTKEHRGVKGFDGADPIDPNSILVEDCDILVPAALGGVINRENANEIKAKFIIEAANHPTDPDADEILSKKGVVILPDIYANSGGVTVSYFEWVQNIQGFMWEEEKVNDELKTYMTRSFKDLKEMCKTHSCDLRMGAFTLGVNRVAQATILRGWGA.

The active site involves Lys-102.

The protein belongs to the Glu/Leu/Phe/Val dehydrogenases family.

It catalyses the reaction L-glutamate + NAD(+) + H2O = 2-oxoglutarate + NH4(+) + NADH + H(+). It carries out the reaction L-glutamate + NADP(+) + H2O = 2-oxoglutarate + NH4(+) + NADPH + H(+). The sequence is that of Glutamate dehydrogenase 1 (GDH1) from Arabidopsis thaliana (Mouse-ear cress).